The following is a 430-amino-acid chain: Enolase (430 aa).

A (2R)-2-phosphoglycerate-binding site is contributed by Gln164. The active-site Proton donor is the Glu208. Mg(2+) is bound by residues Asp245, Glu288, and Asp315. Positions 340, 369, 370, and 391 each coordinate (2R)-2-phosphoglycerate. The active-site Proton acceptor is Lys340.

Belongs to the enolase family. The cofactor is Mg(2+).

It is found in the cytoplasm. It localises to the secreted. Its subcellular location is the cell surface. The enzyme catalyses (2R)-2-phosphoglycerate = phosphoenolpyruvate + H2O. It participates in carbohydrate degradation; glycolysis; pyruvate from D-glyceraldehyde 3-phosphate: step 4/5. Catalyzes the reversible conversion of 2-phosphoglycerate (2-PG) into phosphoenolpyruvate (PEP). It is essential for the degradation of carbohydrates via glycolysis. In Thermococcus onnurineus (strain NA1), this protein is Enolase.